A 57-amino-acid chain; its full sequence is Large ribosomal subunit protein bL32 (57 aa).

Belongs to the bacterial ribosomal protein bL32 family.

The sequence is that of Large ribosomal subunit protein bL32 from Bacillus anthracis (strain A0248).